The sequence spans 138 residues: Salivary protein 15 Iper-3 (138 aa).

Residues 1 to 21 (MESFVAMKVVCITVLFVIVAV) form the signal peptide. N-linked (GlcNAc...) asparagine glycosylation is found at Asn-30, Asn-42, Asn-68, Asn-107, and Asn-127. The segment at 119-138 (GPNGQKCANKSQCVGHIPGC) is CD4-binding.

It belongs to the salp15 family. In terms of assembly, interacts with host CD4. Interacts with host DC-SIGN (CD209). Interacts with Borrelia outer surface protein C (OspC). In terms of tissue distribution, expressed in salivary glands.

The protein localises to the secreted. Functionally, salivary tick protein that downregulates host immune system by binding to both dendritic cells, and CD4(+) T cells. Specifically binds to the CD4 coreceptor on T cells. This interaction prevents the activation of the Src kinase, Lck, and its downstream substrate Zap-70, and results in deficient activation of PLCgamma1, the repression of calcium fluxes triggered by T-cell antigen receptor (TCR) ligation, and a subsequent reduction in interleukin-2 production. This salivary protein also binds to DC-SIGN (CD209) on dendritic cells (DC) and activates the Raf-1 kinase/MEK signaling pathway that results in down-regulating expression of pro-inflammatory cytokines. Furthermore, it inhibits T cell proliferation induced by DCs. It also inhibits in vitro keratinocyte inflammation induced by Borrelia burgdorferi or by the major outer surface protein (OspC) of Borrelia. In addition, it downregulates chemokines and monocyte chemoattractant protein 1, as well as several antimicrobial peptides such as defensins, cathelicidin, psoriasin, and RNase 7. Apart from its immunomodulatory activities, it is also associated with protection of Borrelia spirochetes from antibody-mediated killing through its binding to OspC. In vivo, tests on different immune disease animal models show promising therapeutic results, e.g., in inhibiting HIV infection, experimental autoimmune encephalomyelitis, transplantation rejection, and asthma. The polypeptide is Salivary protein 15 Iper-3 (Ixodes persulcatus (Taiga tick)).